Here is a 356-residue protein sequence, read N- to C-terminus: UDP-N-acetylglucosamine--N-acetylmuramyl-(pentapeptide) pyrophosphoryl-undecaprenol N-acetylglucosamine transferase (356 aa).

UDP-N-acetyl-alpha-D-glucosamine contacts are provided by residues 12–14 (TGG), Asn-124, Arg-163, Ser-188, Ile-242, and Gln-287.

Belongs to the glycosyltransferase 28 family. MurG subfamily.

It localises to the cell inner membrane. The catalysed reaction is di-trans,octa-cis-undecaprenyl diphospho-N-acetyl-alpha-D-muramoyl-L-alanyl-D-glutamyl-meso-2,6-diaminopimeloyl-D-alanyl-D-alanine + UDP-N-acetyl-alpha-D-glucosamine = di-trans,octa-cis-undecaprenyl diphospho-[N-acetyl-alpha-D-glucosaminyl-(1-&gt;4)]-N-acetyl-alpha-D-muramoyl-L-alanyl-D-glutamyl-meso-2,6-diaminopimeloyl-D-alanyl-D-alanine + UDP + H(+). Its pathway is cell wall biogenesis; peptidoglycan biosynthesis. Cell wall formation. Catalyzes the transfer of a GlcNAc subunit on undecaprenyl-pyrophosphoryl-MurNAc-pentapeptide (lipid intermediate I) to form undecaprenyl-pyrophosphoryl-MurNAc-(pentapeptide)GlcNAc (lipid intermediate II). This Pseudomonas savastanoi pv. phaseolicola (strain 1448A / Race 6) (Pseudomonas syringae pv. phaseolicola (strain 1448A / Race 6)) protein is UDP-N-acetylglucosamine--N-acetylmuramyl-(pentapeptide) pyrophosphoryl-undecaprenol N-acetylglucosamine transferase.